The primary structure comprises 466 residues: Probable sensor protein PcoS (466 aa).

The Cytoplasmic portion of the chain corresponds to 1–10 (MRFKISLTTR). The helical transmembrane segment at 11–31 (LSLIFSAVMLTVWWLSSFILI) threads the bilayer. Topologically, residues 32–171 (STLNDYFDNQ…HTLLMDKLST (140 aa)) are periplasmic. A helical transmembrane segment spans residues 172 to 192 (WLFWFNIGLVFISVFLGWLTT). The region spanning 193–246 (RIGLKPLREMTSLASSMTVHSLDQRLNPDLAPPEISETMQEFNNMFDRLEGAFR) is the HAMP domain. Over 193–466 (RIGLKPLREM…IVFKVRLLMD (274 aa)) the chain is Cytoplasmic. Positions 254-466 (DIAHELRTPV…IVFKVRLLMD (213 aa)) constitute a Histidine kinase domain. His257 bears the Phosphohistidine; by autocatalysis mark.

The protein resides in the cell inner membrane. The catalysed reaction is ATP + protein L-histidine = ADP + protein N-phospho-L-histidine.. Functionally, probable member of a two-component regulatory system PcoS/PcoR. May activate PcoR by phosphorylation. This Escherichia coli protein is Probable sensor protein PcoS (pcoS).